Consider the following 201-residue polypeptide: Akirin-2 (201 aa).

A phosphoserine mark is found at Ser18 and Ser21. A Nuclear localization signal motif is present at residues 22–27; that stretch reads PKRRRC. Ser55 is subject to Phosphoserine. The short motif at 198-201 is the SYVS motif element; the sequence is SYVS.

The protein belongs to the akirin family. Homodimer. Interacts with IPO9; the interaction is direct. Associates with 20S and 26S proteasomes. Interacts with SMARCD1; promoting SWI/SNF complex recruitment. Interacts with NFKBIZ. Interacts with YWHAB. Post-translationally, polyubiquitinated. Polyubiquitination is dependent of UBR5 that extends pre-ubiquitinated AKIRIN2. Highly expressed in testis, cerebrum and cerebellum, and barely detectable in liver, heart, spleen and muscle. Also highly expressed in various tumor cells from hepatoma, glioblastoma and pheochromocytoma.

It is found in the nucleus. The protein localises to the cytoplasm. Its subcellular location is the membrane. In terms of biological role, molecular adapter that acts as a bridge between a variety of multiprotein complexes, and which is involved in embryonic development, immunity, myogenesis and brain development. Plays a key role in nuclear protein degradation by promoting import of proteasomes into the nucleus: directly binds to fully assembled 20S proteasomes at one end and to nuclear import receptor IPO9 at the other end, bridging them together and mediating the import of pre-assembled proteasome complexes through the nuclear pore. Involved in innate immunity by regulating the production of interleukin-6 (IL6) downstream of Toll-like receptor (TLR): acts by bridging the NF-kappa-B inhibitor NFKBIZ and the SWI/SNF complex, leading to promote induction of IL6. Also involved in adaptive immunity by promoting B-cell activation. Involved in brain development: required for the survival and proliferation of cerebral cortical progenitor cells. Involved in myogenesis: required for skeletal muscle formation and skeletal development, possibly by regulating expression of muscle differentiation factors. Also plays a role in facilitating interdigital tissue regression during limb development. The sequence is that of Akirin-2 from Rattus norvegicus (Rat).